Reading from the N-terminus, the 125-residue chain is MPTINQLVRKPRVSEVIKSKSPALENCPQRRGVCTRVYTTTPKKPNSALRKVAKVRLTNGFEVISYIGGEGHNLQEHSVVLIRGGRVKDLPGVRYHIVRGSLDLQGVKDRRQARSKYGAKRPKAA.

At Asp89 the chain carries 3-methylthioaspartic acid.

The protein belongs to the universal ribosomal protein uS12 family. In terms of assembly, part of the 30S ribosomal subunit. Contacts proteins S8 and S17. May interact with IF1 in the 30S initiation complex.

Functionally, with S4 and S5 plays an important role in translational accuracy. Interacts with and stabilizes bases of the 16S rRNA that are involved in tRNA selection in the A site and with the mRNA backbone. Located at the interface of the 30S and 50S subunits, it traverses the body of the 30S subunit contacting proteins on the other side and probably holding the rRNA structure together. The combined cluster of proteins S8, S12 and S17 appears to hold together the shoulder and platform of the 30S subunit. This Cupriavidus metallidurans (strain ATCC 43123 / DSM 2839 / NBRC 102507 / CH34) (Ralstonia metallidurans) protein is Small ribosomal subunit protein uS12.